The following is a 443-amino-acid chain: Histidinol dehydrogenase (443 aa).

Residues Y141, Q203, and N226 each coordinate NAD(+). 3 residues coordinate substrate: S249, Q271, and H274. Zn(2+) is bound by residues Q271 and H274. Catalysis depends on proton acceptor residues E339 and H340. 4 residues coordinate substrate: H340, D373, E427, and H432. Residue D373 coordinates Zn(2+). H432 contacts Zn(2+).

This sequence belongs to the histidinol dehydrogenase family. Zn(2+) is required as a cofactor.

It carries out the reaction L-histidinol + 2 NAD(+) + H2O = L-histidine + 2 NADH + 3 H(+). It participates in amino-acid biosynthesis; L-histidine biosynthesis; L-histidine from 5-phospho-alpha-D-ribose 1-diphosphate: step 9/9. Catalyzes the sequential NAD-dependent oxidations of L-histidinol to L-histidinaldehyde and then to L-histidine. This is Histidinol dehydrogenase from Chlorobium luteolum (strain DSM 273 / BCRC 81028 / 2530) (Pelodictyon luteolum).